A 58-amino-acid chain; its full sequence is Large ribosomal subunit protein bL32c (58 aa).

The segment at methionine 1–lysine 23 is disordered.

Belongs to the bacterial ribosomal protein bL32 family.

Its subcellular location is the plastid. It localises to the chloroplast. The protein is Large ribosomal subunit protein bL32c (rpl32-A) of Trieres chinensis (Marine centric diatom).